The following is a 400-amino-acid chain: Bifunctional enzyme IspD/IspF (400 aa).

The segment at 1-244 (MSHRVLGTER…LLKERDKMDI (244 aa)) is 2-C-methyl-D-erythritol 4-phosphate cytidylyltransferase. Residues 245–400 (RTGNGYDVHR…ALATVTLVRT (156 aa)) are 2-C-methyl-D-erythritol 2,4-cyclodiphosphate synthase. Asp-251 and His-253 together coordinate a divalent metal cation. 4-CDP-2-C-methyl-D-erythritol 2-phosphate is bound by residues 251 to 253 (DVH) and 277 to 278 (HS). His-285 contacts a divalent metal cation. 4-CDP-2-C-methyl-D-erythritol 2-phosphate is bound by residues 299 to 301 (DIG), 375 to 378 (TTSE), Phe-382, and Arg-385.

In the N-terminal section; belongs to the IspD/TarI cytidylyltransferase family. IspD subfamily. It in the C-terminal section; belongs to the IspF family. A divalent metal cation is required as a cofactor.

It catalyses the reaction 2-C-methyl-D-erythritol 4-phosphate + CTP + H(+) = 4-CDP-2-C-methyl-D-erythritol + diphosphate. The catalysed reaction is 4-CDP-2-C-methyl-D-erythritol 2-phosphate = 2-C-methyl-D-erythritol 2,4-cyclic diphosphate + CMP. The protein operates within isoprenoid biosynthesis; isopentenyl diphosphate biosynthesis via DXP pathway; isopentenyl diphosphate from 1-deoxy-D-xylulose 5-phosphate: step 2/6. It participates in isoprenoid biosynthesis; isopentenyl diphosphate biosynthesis via DXP pathway; isopentenyl diphosphate from 1-deoxy-D-xylulose 5-phosphate: step 4/6. Bifunctional enzyme that catalyzes the formation of 4-diphosphocytidyl-2-C-methyl-D-erythritol from CTP and 2-C-methyl-D-erythritol 4-phosphate (MEP) (IspD), and catalyzes the conversion of 4-diphosphocytidyl-2-C-methyl-D-erythritol 2-phosphate (CDP-ME2P) to 2-C-methyl-D-erythritol 2,4-cyclodiphosphate (ME-CPP) with a corresponding release of cytidine 5-monophosphate (CMP) (IspF). The chain is Bifunctional enzyme IspD/IspF from Dinoroseobacter shibae (strain DSM 16493 / NCIMB 14021 / DFL 12).